The chain runs to 709 residues: Twinkle homolog protein, chloroplastic/mitochondrial (709 aa).

Residues 1–16 (MRFLLRLPQIHFRKLS) constitute a chloroplast and mitochondrion transit peptide. Residues 280-385 (SEVIIVEGEI…KKSEDEHFKD (106 aa)) form the Toprim domain. Mg(2+)-binding residues include E286, D348, and D350. The 269-residue stretch at 430–698 (THGHEYGVST…GSYSDSPVTP (269 aa)) folds into the SF4 helicase domain. 460–467 (GIPNSGKS) is a binding site for ATP.

Mg(2+) serves as cofactor. As to expression, expressed in young leaves and shoot apex tissues. Detected in developing tissues such as cotyledons, sepals, pistils and inflorescences. Nearly undetectable in mature leaves.

The protein localises to the plastid. It is found in the chloroplast. The protein resides in the mitochondrion. The catalysed reaction is ATP + H2O = ADP + phosphate + H(+). In terms of biological role, has both DNA primase and DNA helicase activities and may be involved in organelle DNA replication. Capable of producing RNA primers of 9 to 18 bases from a single-stranded DNA template. This chain is Twinkle homolog protein, chloroplastic/mitochondrial, found in Arabidopsis thaliana (Mouse-ear cress).